Reading from the N-terminus, the 735-residue chain is Muskelin (735 aa).

The residue at position 2 (alanine 2) is an N-acetylalanine. Residues 172 to 204 (REQEAIRLCLKHFRQHNYTEAFESLQKKTKIAL) enclose the LisH domain. Positions 206 to 258 (HPMLTDIHDKLVLKGDFDACEELIEKAVNDGLFNQYISQQEYKPRWSQIIPKS) constitute a CTLH domain. 6 Kelch repeats span residues 284 to 330 (TVYL…SCHK), 339 to 391 (QIYT…FDHQ), 408 to 458 (ILTC…SRIG), 469 to 515 (CLYV…TGFT), 526 to 578 (EIHV…SLQE), and 597 to 651 (VHYL…AQVD).

Homodimer; may form higher oligomers. Identified in the CTLH complex that contains GID4, RANBP9 and/or RANBP10, MKLN1, MAEA, RMND5A (or alternatively its paralog RMND5B), GID8, ARMC8, WDR26 and YPEL5. Within this complex, MAEA, RMND5A (or alternatively its paralog RMND5B), GID8, WDR26, and RANBP9 and/or RANBP10 form the catalytic core, while GID4, MKLN1, ARMC8 and YPEL5 have ancillary roles. Interacts with RANBP9. Part of a complex consisting of RANBP9, MKLN1 and GID8. Interacts with GABRA1. Interacts with the C-terminal tail of PTGER3.

It localises to the cytoplasm. It is found in the cytosol. Its subcellular location is the nucleus. The protein localises to the nucleoplasm. The protein resides in the cell projection. It localises to the ruffle. It is found in the cell cortex. Its subcellular location is the synapse. The protein localises to the postsynapse. In terms of biological role, component of the CTLH E3 ubiquitin-protein ligase complex that selectively accepts ubiquitin from UBE2H and mediates ubiquitination and subsequent proteasomal degradation of the transcription factor HBP1. Required for internalization of the GABA receptor GABRA1 from the cell membrane via endosomes and subsequent GABRA1 degradation. Acts as a mediator of cell spreading and cytoskeletal responses to the extracellular matrix component THBS1. In Homo sapiens (Human), this protein is Muskelin (MKLN1).